The following is a 343-amino-acid chain: Protein RecA (343 aa).

65-72 (GPESSGKT) provides a ligand contact to ATP.

The protein belongs to the RecA family.

The protein resides in the cytoplasm. Functionally, can catalyze the hydrolysis of ATP in the presence of single-stranded DNA, the ATP-dependent uptake of single-stranded DNA by duplex DNA, and the ATP-dependent hybridization of homologous single-stranded DNAs. It interacts with LexA causing its activation and leading to its autocatalytic cleavage. The chain is Protein RecA from Campylobacter jejuni subsp. jejuni serotype O:6 (strain 81116 / NCTC 11828).